The chain runs to 215 residues: Cytokinin riboside 5'-monophosphate phosphoribohydrolase LOG3 (215 aa).

Substrate contacts are provided by residues Glu84, 102 to 103, 119 to 125, and Thr131; these read RK and GYGTLEE.

It belongs to the LOG family. Expressed in roots and shoots. Detected in root procambium, lateral root primordia, vascular tissues of immature leaves, axillary buds, style and ovular funiculus.

It is found in the cytoplasm. It localises to the nucleus. The catalysed reaction is N(6)-(dimethylallyl)adenosine 5'-phosphate + H2O = N(6)-dimethylallyladenine + D-ribose 5-phosphate. It catalyses the reaction 9-ribosyl-trans-zeatin 5'-phosphate + H2O = trans-zeatin + D-ribose 5-phosphate. Functionally, cytokinin-activating enzyme working in the direct activation pathway. Phosphoribohydrolase that converts inactive cytokinin nucleotides to the biologically active free-base forms. The polypeptide is Cytokinin riboside 5'-monophosphate phosphoribohydrolase LOG3 (LOG3) (Arabidopsis thaliana (Mouse-ear cress)).